A 462-amino-acid polypeptide reads, in one-letter code: Lipase A (462 aa).

The signal sequence occupies residues 1 to 21; that stretch reads MRVSLRSITSLLAAATAAVLA. Cysteine 122 and cysteine 294 are joined by a disulfide. Residues serine 205, aspartate 355, and histidine 387 each act as charge relay system in the active site. A disulfide bond links cysteine 371 and cysteine 415.

It belongs to the AB hydrolase superfamily. Lipase family. In terms of assembly, monomer.

Its subcellular location is the secreted. The enzyme catalyses a triacylglycerol + H2O = a diacylglycerol + a fatty acid + H(+). Hydrolyzes triglycerides, with a preference for substrates with short-chain lengths (C4 to C8). Has the highest activity with tributyrin (C4), followed by tricaproin (C6) and tricaprylin (C8). Can also hydrolyze vinylacetate (C2) and triolein (C18), but with lower efficiency. Has no activity with tripalmitin (C16). The protein is Lipase A of Moesziomyces aphidis (Pseudozyma aphidis).